Reading from the N-terminus, the 307-residue chain is Mycothiol acetyltransferase (307 aa).

N-acetyltransferase domains follow at residues 12 to 152 (TRTD…APIP) and 160 to 307 (VTLR…YQRS). A 1D-myo-inositol 2-(L-cysteinylamino)-2-deoxy-alpha-D-glucopyranoside-binding site is contributed by Glu43. Residue 87–89 (LAV) participates in acetyl-CoA binding. 1D-myo-inositol 2-(L-cysteinylamino)-2-deoxy-alpha-D-glucopyranoside-binding residues include Glu187, Lys227, and Glu239. Acetyl-CoA contacts are provided by residues 243–245 (LGV) and 250–256 (HGGGLGK). Tyr278 contributes to the 1D-myo-inositol 2-(L-cysteinylamino)-2-deoxy-alpha-D-glucopyranoside binding site.

This sequence belongs to the acetyltransferase family. MshD subfamily. In terms of assembly, monomer.

The enzyme catalyses 1D-myo-inositol 2-(L-cysteinylamino)-2-deoxy-alpha-D-glucopyranoside + acetyl-CoA = mycothiol + CoA + H(+). In terms of biological role, catalyzes the transfer of acetyl from acetyl-CoA to desacetylmycothiol (Cys-GlcN-Ins) to form mycothiol. This Salinispora arenicola (strain CNS-205) protein is Mycothiol acetyltransferase.